The primary structure comprises 352 residues: MHIQEFHQALADIGARPCHIGRINRAWLKGLPLDAGTRHQKSEDYFPLSVREGLAPIAARIEKLARIHSRHDADDGSLRLLVGLGDGQMVESVLLPRDGLCVSSQVGCAVGCTFCMTGKSGLLRQLGSAEIAAQVALARRIRPVKKVVFMGMGEPAHNMENVLEAIQWLGTDGNIGHKNLVFSTVGDARVFERLPQLEVKPALALSLHTTRADLREQLLPRAPRIAPAELVELGEAYARRVGYPIQYQWTLLAGVNDSQEEMDAAARLLKGKYGVLNIIPYNSVEGDRFQRPSSERVQAIKRYLHDNGVLTKVRDSAGQDVDGGCGQLRARAAHVIDASRLRRREQAGVSAG.

The active-site Proton acceptor is the Glu91. Residues 94–320 enclose the Radical SAM core domain; it reads LLPRDGLCVS…TKVRDSAGQD (227 aa). A disulfide bond links Cys101 and Cys325. Positions 108, 112, and 115 each coordinate [4Fe-4S] cluster. S-adenosyl-L-methionine is bound by residues 153 to 154, Ser183, 206 to 208, and Asn282; these read GE and SLH. Cys325 (S-methylcysteine intermediate) is an active-site residue.

This sequence belongs to the radical SAM superfamily. RlmN family. Requires [4Fe-4S] cluster as cofactor.

It localises to the cytoplasm. The polypeptide is Probable RNA methyltransferase CV_2253 (Chromobacterium violaceum (strain ATCC 12472 / DSM 30191 / JCM 1249 / CCUG 213 / NBRC 12614 / NCIMB 9131 / NCTC 9757 / MK)).